A 421-amino-acid chain; its full sequence is Probable mitochondrial chaperone BCS1-A (421 aa).

Over 1–10 (MNHLKDQSKS) the chain is Mitochondrial intermembrane. A helical transmembrane segment spans residues 11–31 (IVLGISSGIGIFLISGGINIF). Residues 32–421 (KNVGQYILNR…VQSITPFNLN (390 aa)) lie on the Mitochondrial matrix side of the membrane. Position 228–235 (228–235 (GEPGNGKS)) interacts with ATP.

The protein belongs to the AAA ATPase family. BCS1 subfamily.

The protein resides in the mitochondrion inner membrane. The catalysed reaction is ATP + H2O = ADP + phosphate + H(+). Chaperone necessary for the assembly of mitochondrial respiratory chain complex III. The chain is Probable mitochondrial chaperone BCS1-A (bcs1la) from Dictyostelium discoideum (Social amoeba).